We begin with the raw amino-acid sequence, 284 residues long: Release factor glutamine methyltransferase (284 aa).

S-adenosyl-L-methionine-binding positions include 125-129 (GVGSG), glutamate 148, and asparagine 190. 190-193 (NPPY) serves as a coordination point for substrate.

This sequence belongs to the protein N5-glutamine methyltransferase family. PrmC subfamily.

The catalysed reaction is L-glutaminyl-[peptide chain release factor] + S-adenosyl-L-methionine = N(5)-methyl-L-glutaminyl-[peptide chain release factor] + S-adenosyl-L-homocysteine + H(+). Methylates the class 1 translation termination release factors RF1/PrfA and RF2/PrfB on the glutamine residue of the universally conserved GGQ motif. In Geobacter sulfurreducens (strain ATCC 51573 / DSM 12127 / PCA), this protein is Release factor glutamine methyltransferase.